The primary structure comprises 292 residues: Siderophore triacetylfusarinine C esterase (292 aa).

The triacetylfusarinine C site is built by Arg-97, Ser-148, Tyr-149, Ser-174, Trp-176, and His-267.

It belongs to the esterase D family.

The protein localises to the cytoplasm. It catalyses the reaction triacetylfusarinine C + 3 H2O = 3 N-acetylfusarinine + Fe(3+). Displays specific triacetylfusarinine C (TAFC) esterase activity but does not hydrolyze fusarinine C, which has the same core structure as TAFC. Hydrolysis optimizes but is not essential for TAFC-mediated iron uptake. Both extra- and intracellular siderophores have been shown to be crucial for the virulence. Subsequent to chelation of iron and uptake, FsC and TAFC are hydrolyzed and the iron is transferred to the metabolism or to the intracellular siderophore ferricrocin (FC) for transport and storage of iron. Hydrolyzes both TAFC and DF-TAFC with equal efficiencies, suggesting that its function might not be restricted to the release of iron from the siderophore but might also include the degradation of the iron-free chelator to protect cells. In Aspergillus fumigatus (strain ATCC MYA-4609 / CBS 101355 / FGSC A1100 / Af293) (Neosartorya fumigata), this protein is Siderophore triacetylfusarinine C esterase.